The following is a 147-amino-acid chain: MRALIQRVLEAKVEVDGQTTGEIKKGLLVFLGLGKEDTLEKGQKLIDKILKYRIFDDEQGKMGWNVSQANGGVLLVSQFTLMAQTQKGLRPDFGPAMPPSDAKALYEQLVEYTRSQFENVQTGIFAADMKVHLINDGPVTFNLEVEA.

The Gly-cisPro motif, important for rejection of L-amino acids signature appears at 137 to 138; it reads GP.

The protein belongs to the DTD family. In terms of assembly, homodimer.

Its subcellular location is the cytoplasm. The enzyme catalyses glycyl-tRNA(Ala) + H2O = tRNA(Ala) + glycine + H(+). The catalysed reaction is a D-aminoacyl-tRNA + H2O = a tRNA + a D-alpha-amino acid + H(+). In terms of biological role, an aminoacyl-tRNA editing enzyme that deacylates mischarged D-aminoacyl-tRNAs. Also deacylates mischarged glycyl-tRNA(Ala), protecting cells against glycine mischarging by AlaRS. Acts via tRNA-based rather than protein-based catalysis; rejects L-amino acids rather than detecting D-amino acids in the active site. By recycling D-aminoacyl-tRNA to D-amino acids and free tRNA molecules, this enzyme counteracts the toxicity associated with the formation of D-aminoacyl-tRNA entities in vivo and helps enforce protein L-homochirality. In Acinetobacter baumannii (strain ACICU), this protein is D-aminoacyl-tRNA deacylase.